The primary structure comprises 37 residues: Large ribosomal subunit protein bL36 (37 aa).

Belongs to the bacterial ribosomal protein bL36 family.

This chain is Large ribosomal subunit protein bL36, found in Ureaplasma urealyticum serovar 10 (strain ATCC 33699 / Western).